Consider the following 194-residue polypeptide: GTP cyclohydrolase 1 (194 aa).

Positions 83, 86, and 155 each coordinate Zn(2+).

The protein belongs to the GTP cyclohydrolase I family. In terms of assembly, toroid-shaped homodecamer, composed of two pentamers of five dimers.

The catalysed reaction is GTP + H2O = 7,8-dihydroneopterin 3'-triphosphate + formate + H(+). Its pathway is cofactor biosynthesis; 7,8-dihydroneopterin triphosphate biosynthesis; 7,8-dihydroneopterin triphosphate from GTP: step 1/1. The polypeptide is GTP cyclohydrolase 1 (folE) (Streptococcus pyogenes serotype M1).